The sequence spans 882 residues: Molybdenum cofactor sulfurase (882 aa).

Lysine 265 bears the N6-(pyridoxal phosphate)lysine mark. The active site involves cysteine 425. The segment at 496-546 is disordered; sequence GQPLPLATPGEAGAPPEDSEAQNAVPAARARGSSSPQEDTSPHSGVWNNSP. Positions 527 to 546 are enriched in polar residues; sequence GSSSPQEDTSPHSGVWNNSP. Phosphoserine is present on residues serine 528 and serine 530. One can recognise an MOSC domain in the interval 707–868; that stretch reads KQSSDFQRNA…LSVGSQVLPL (162 aa).

Belongs to the class-V pyridoxal-phosphate-dependent aminotransferase family. MOCOS subfamily. Requires pyridoxal 5'-phosphate as cofactor. In terms of tissue distribution, ubiquitously expressed.

It catalyses the reaction Mo-molybdopterin + L-cysteine + AH2 = thio-Mo-molybdopterin + L-alanine + A + H2O. It participates in cofactor biosynthesis; molybdopterin biosynthesis. In terms of biological role, sulfurates the molybdenum cofactor. Sulfation of molybdenum is essential for xanthine dehydrogenase (XDH) and aldehyde oxidase (ADO) enzymes in which molybdenum cofactor is liganded by 1 oxygen and 1 sulfur atom in active form. The chain is Molybdenum cofactor sulfurase from Bos taurus (Bovine).